The sequence spans 245 residues: Ribonuclease PH (245 aa).

Phosphate is bound by residues arginine 93 and 131-133 (GTR).

It belongs to the RNase PH family. Homohexameric ring arranged as a trimer of dimers.

The enzyme catalyses tRNA(n+1) + phosphate = tRNA(n) + a ribonucleoside 5'-diphosphate. Its function is as follows. Phosphorolytic 3'-5' exoribonuclease that plays an important role in tRNA 3'-end maturation. Removes nucleotide residues following the 3'-CCA terminus of tRNAs; can also add nucleotides to the ends of RNA molecules by using nucleoside diphosphates as substrates, but this may not be physiologically important. Probably plays a role in initiation of 16S rRNA degradation (leading to ribosome degradation) during starvation. In Corynebacterium efficiens (strain DSM 44549 / YS-314 / AJ 12310 / JCM 11189 / NBRC 100395), this protein is Ribonuclease PH.